A 738-amino-acid polypeptide reads, in one-letter code: Dipeptidyl peptidase 3 (738 aa).

The residue at position 2 (Ala2) is an N-acetylalanine. His450 serves as a coordination point for Zn(2+). Glu451 is an active-site residue. Residues His455 and Glu508 each contribute to the Zn(2+) site.

This sequence belongs to the peptidase M49 family. It depends on Zn(2+) as a cofactor.

It is found in the cytoplasm. The protein localises to the cytosol. The catalysed reaction is Release of an N-terminal dipeptide from a peptide comprising four or more residues, with broad specificity. Also acts on dipeptidyl 2-naphthylamides.. Functionally, cleaves and degrades bioactive peptides, including angiotensin, Leu-enkephalin and Met-enkephalin. Also cleaves Arg-Arg-beta-naphthylamide (in vitro). This chain is Dipeptidyl peptidase 3 (Dpp3), found in Mus musculus (Mouse).